Consider the following 454-residue polypeptide: tRNA modification GTPase MnmE (454 aa).

Residues R23, E80, and K120 each contribute to the (6S)-5-formyl-5,6,7,8-tetrahydrofolate site. In terms of domain architecture, TrmE-type G spans 216–377 (TIKIVIAGPP…LKNKILEITT (162 aa)). N226 contributes to the K(+) binding site. GTP is bound by residues 226 to 231 (NVGKSS), 245 to 251 (TNIPGTT), and 270 to 273 (DTAG). S230 provides a ligand contact to Mg(2+). K(+)-binding residues include T245, I247, and T250. T251 provides a ligand contact to Mg(2+). K454 contributes to the (6S)-5-formyl-5,6,7,8-tetrahydrofolate binding site.

It belongs to the TRAFAC class TrmE-Era-EngA-EngB-Septin-like GTPase superfamily. TrmE GTPase family. As to quaternary structure, homodimer. Heterotetramer of two MnmE and two MnmG subunits. K(+) serves as cofactor.

The protein localises to the cytoplasm. In terms of biological role, exhibits a very high intrinsic GTPase hydrolysis rate. Involved in the addition of a carboxymethylaminomethyl (cmnm) group at the wobble position (U34) of certain tRNAs, forming tRNA-cmnm(5)s(2)U34. The chain is tRNA modification GTPase MnmE from Buchnera aphidicola subsp. Cinara cedri (strain Cc).